Reading from the N-terminus, the 188-residue chain is Adenine phosphoribosyltransferase (188 aa).

This sequence belongs to the purine/pyrimidine phosphoribosyltransferase family. Homodimer.

Its subcellular location is the cytoplasm. It catalyses the reaction AMP + diphosphate = 5-phospho-alpha-D-ribose 1-diphosphate + adenine. It participates in purine metabolism; AMP biosynthesis via salvage pathway; AMP from adenine: step 1/1. Functionally, catalyzes a salvage reaction resulting in the formation of AMP, that is energically less costly than de novo synthesis. This chain is Adenine phosphoribosyltransferase, found in Burkholderia thailandensis (strain ATCC 700388 / DSM 13276 / CCUG 48851 / CIP 106301 / E264).